The sequence spans 875 residues: Kelch-like protein 29 (875 aa).

Polar residues predominate over residues 115-126 (WGQTPINQSTPW). Disordered stretches follow at residues 115 to 145 (WGQT…PGTG) and 248 to 291 (GPTA…DSAH). Positions 131 to 140 (PPSKQMRESD) are enriched in basic and acidic residues. In terms of domain architecture, BTB spans 329 to 401 (TDLKIVVEGR…VYTGSLVIDS (73 aa)). Kelch repeat units follow at residues 585–635 (VIVL…VSAG), 637–683 (NIYL…VYDG), 684–730 (KIYT…VCGG), 732–778 (IYVF…TLNG), 779–821 (FVFI…VLDG), and 822–870 (KIYA…VIKK).

This is Kelch-like protein 29 (KLHL29) from Homo sapiens (Human).